Here is a 455-residue protein sequence, read N- to C-terminus: GTPase Der (455 aa).

2 consecutive EngA-type G domains span residues 4 to 169 and 178 to 353; these read PVVA…PPKD and IQLS…EQHR. GTP contacts are provided by residues 10–17, 57–61, 120–123, 184–191, 231–235, and 296–299; these read GRPNVGKS, DTGGL, NKCE, DTAGI, and NKWD. The 86-residue stretch at 354–439 folds into the KH-like domain; it reads RRVSTSVVNE…PVKLFWRGKQ (86 aa).

It belongs to the TRAFAC class TrmE-Era-EngA-EngB-Septin-like GTPase superfamily. EngA (Der) GTPase family. In terms of assembly, associates with the 50S ribosomal subunit.

In terms of biological role, GTPase that plays an essential role in the late steps of ribosome biogenesis. This is GTPase Der from Synechococcus sp. (strain CC9311).